The following is a 144-amino-acid chain: Maximins 6/Hv (144 aa).

The first 18 residues, M1–A18, serve as a signal peptide directing secretion. The propeptide occupies R19–R43. Position 70 is an asparagine amide (N70). Positions T74 to R123 are excised as a propeptide. Isoleucine amide is present on I143.

Belongs to the bombinin family. As to expression, expressed by the skin glands.

It is found in the secreted. Shows antimicrobial activity against bacteria and against the fungus C.albicans. It has little hemolytic activity. Functionally, shows antimicrobial activity against bacteria and against the fungus C.albicans. Shows strong hemolytic activity. The chain is Maximins 6/Hv from Bombina maxima (Giant fire-bellied toad).